The sequence spans 239 residues: Ribonuclease 3 (239 aa).

Positions 18-141 constitute an RNase III domain; sequence YTTLEKALGY…LMAGVYLEAG (124 aa). Residue glutamate 54 participates in Mg(2+) binding. The active site involves aspartate 58. Mg(2+) is bound by residues serine 127 and glutamate 130. The active site involves glutamate 130. One can recognise a DRBM domain in the interval 168–237; sequence DYKTALQELT…AYYALQKLKE (70 aa).

The protein belongs to the ribonuclease III family. Homodimer. Mg(2+) is required as a cofactor.

The protein localises to the cytoplasm. The enzyme catalyses Endonucleolytic cleavage to 5'-phosphomonoester.. In terms of biological role, digests double-stranded RNA. Involved in the processing of primary rRNA transcript to yield the immediate precursors to the large and small rRNAs (23S and 16S). Processes some mRNAs, and tRNAs when they are encoded in the rRNA operon. Processes pre-crRNA and tracrRNA of type II CRISPR loci if present in the organism. The polypeptide is Ribonuclease 3 (Helicobacter pylori (strain G27)).